The sequence spans 208 residues: Outer-membrane lipoprotein carrier protein (208 aa).

An N-terminal signal peptide occupies residues 1–22 (MRKTLSILAISLPLLVSGYAQA).

It belongs to the LolA family. As to quaternary structure, monomer.

Its subcellular location is the periplasm. Its function is as follows. Participates in the translocation of lipoproteins from the inner membrane to the outer membrane. Only forms a complex with a lipoprotein if the residue after the N-terminal Cys is not an aspartate (The Asp acts as a targeting signal to indicate that the lipoprotein should stay in the inner membrane). In Shewanella sediminis (strain HAW-EB3), this protein is Outer-membrane lipoprotein carrier protein.